The following is a 369-amino-acid chain: Ribosome-interacting GTPase 1 (369 aa).

N-acetylserine is present on serine 2. Positions 66 to 292 (ASVGFVGFPS…LLQVMWDRLN (227 aa)) constitute an OBG-type G domain. GTP contacts are provided by residues 72 to 79 (GFPSVGKS), 118 to 122 (DLPGI), and 250 to 253 (NKID). The TGS domain maps to 292–368 (NLVRIYTKPK…EDEDVVTILK (77 aa)).

Belongs to the TRAFAC class OBG-HflX-like GTPase superfamily. OBG GTPase family. Associates with translating polyribosomes. Interacts with GIR2, TMA46, YAP1 and YGR250C.

Its subcellular location is the cytoplasm. Functionally, involved in ribosomal function. This is Ribosome-interacting GTPase 1 (RBG1) from Saccharomyces cerevisiae (strain ATCC 204508 / S288c) (Baker's yeast).